The sequence spans 451 residues: tRNA-2-methylthio-N(6)-dimethylallyladenosine synthase (451 aa).

Positions 3–120 constitute an MTTase N-terminal domain; the sequence is KKLFIQTHGC…LPEMVNAAGK (118 aa). 6 residues coordinate [4Fe-4S] cluster: Cys-12, Cys-49, Cys-83, Cys-156, Cys-160, and Cys-163. In terms of domain architecture, Radical SAM core spans 142–374; it reads RVEGAEAFVS…QRRISQQAYD (233 aa). The 65-residue stretch at 377-441 folds into the TRAM domain; that stretch reads LSMVGEVQRI…PNSLLGELVG (65 aa).

Belongs to the methylthiotransferase family. MiaB subfamily. As to quaternary structure, monomer. [4Fe-4S] cluster is required as a cofactor.

The protein resides in the cytoplasm. It carries out the reaction N(6)-dimethylallyladenosine(37) in tRNA + (sulfur carrier)-SH + AH2 + 2 S-adenosyl-L-methionine = 2-methylsulfanyl-N(6)-dimethylallyladenosine(37) in tRNA + (sulfur carrier)-H + 5'-deoxyadenosine + L-methionine + A + S-adenosyl-L-homocysteine + 2 H(+). Functionally, catalyzes the methylthiolation of N6-(dimethylallyl)adenosine (i(6)A), leading to the formation of 2-methylthio-N6-(dimethylallyl)adenosine (ms(2)i(6)A) at position 37 in tRNAs that read codons beginning with uridine. The chain is tRNA-2-methylthio-N(6)-dimethylallyladenosine synthase from Marinomonas sp. (strain MWYL1).